Reading from the N-terminus, the 272-residue chain is S-adenosylmethionine decarboxylase proenzyme (272 aa).

Ser-122 (schiff-base intermediate with substrate; via pyruvic acid) is an active-site residue. Ser-122 is subject to Pyruvic acid (Ser); by autocatalysis. His-127 serves as the catalytic Proton acceptor; for processing activity. Cys-150 serves as the catalytic Proton donor; for catalytic activity.

The protein belongs to the prokaryotic AdoMetDC family. Type 2 subfamily. In terms of assembly, heterooctamer of four alpha and four beta chains arranged as a tetramer of alpha/beta heterodimers. Pyruvate serves as cofactor. Is synthesized initially as an inactive proenzyme. Formation of the active enzyme involves a self-maturation process in which the active site pyruvoyl group is generated from an internal serine residue via an autocatalytic post-translational modification. Two non-identical subunits are generated from the proenzyme in this reaction, and the pyruvate is formed at the N-terminus of the alpha chain, which is derived from the carboxyl end of the proenzyme. The post-translation cleavage follows an unusual pathway, termed non-hydrolytic serinolysis, in which the side chain hydroxyl group of the serine supplies its oxygen atom to form the C-terminus of the beta chain, while the remainder of the serine residue undergoes an oxidative deamination to produce ammonia and the pyruvoyl group blocking the N-terminus of the alpha chain.

It catalyses the reaction S-adenosyl-L-methionine + H(+) = S-adenosyl 3-(methylsulfanyl)propylamine + CO2. It participates in amine and polyamine biosynthesis; S-adenosylmethioninamine biosynthesis; S-adenosylmethioninamine from S-adenosyl-L-methionine: step 1/1. Functionally, catalyzes the decarboxylation of S-adenosylmethionine to S-adenosylmethioninamine (dcAdoMet), the propylamine donor required for the synthesis of the polyamines spermine and spermidine from the diamine putrescine. This chain is S-adenosylmethionine decarboxylase proenzyme, found in Clostridium botulinum (strain Eklund 17B / Type B).